A 659-amino-acid polypeptide reads, in one-letter code: Cysteine-rich receptor-like protein kinase 7 (659 aa).

Positions 1 to 23 (MSSLFPFIFLFLFSFLTSFRASA) are cleaved as a signal peptide. Residues 24–273 (QDPRFLAYYC…SLSDKSGNSN (250 aa)) are Extracellular-facing. Gnk2-homologous domains are found at residues 27–131 (RFLA…HKNI) and 142–244 (FILR…LYDF). 5 N-linked (GlcNAc...) asparagine glycosylation sites follow: Asn-35, Asn-42, Asn-60, Asn-69, and Asn-103. Residue Asn-246 is glycosylated (N-linked (GlcNAc...) asparagine). Residues 274–294 (VVVVAVVVPIIVAVLIFIAGY) form a helical membrane-spanning segment. Topologically, residues 295–659 (CFFAKRAKKT…DKSMSDLDPR (365 aa)) are cytoplasmic. The region spanning 336-622 (FSENNKIGRG…ALPAPQQPGF (287 aa)) is the Protein kinase domain. ATP-binding positions include 342-350 (IGRGGFGDV) and Lys-364. Tyr-409 carries the phosphotyrosine modification. The active-site Proton acceptor is the Asp-461. Ser-465 carries the phosphoserine modification. The residue at position 501 (Thr-501) is a Phosphothreonine. At Tyr-509 the chain carries Phosphotyrosine. The tract at residues 626–659 (SRPGTNRLDSDQSTTNKSVTVSIDDKSMSDLDPR) is disordered. Residues 636 to 646 (DQSTTNKSVTV) are compositionally biased toward polar residues. Over residues 648–659 (IDDKSMSDLDPR) the composition is skewed to basic and acidic residues.

This sequence belongs to the protein kinase superfamily. Ser/Thr protein kinase family. CRK subfamily.

Its subcellular location is the membrane. It catalyses the reaction L-seryl-[protein] + ATP = O-phospho-L-seryl-[protein] + ADP + H(+). The catalysed reaction is L-threonyl-[protein] + ATP = O-phospho-L-threonyl-[protein] + ADP + H(+). This chain is Cysteine-rich receptor-like protein kinase 7 (CRK7), found in Arabidopsis thaliana (Mouse-ear cress).